Reading from the N-terminus, the 131-residue chain is MKSCGLLPFTVLLALGILAPWTVEGGKNDAIKIGACPAKKPAQCLKLEKPQCRTDWECPGKQRCCQDACGSKCVNPVPIRKPVWRKPGRCVKTQARCMMLNPPNVCQRDGQCDGKYKCCEGICGKVCLPPM.

Positions 1 to 25 are cleaved as a signal peptide; that stretch reads MKSCGLLPFTVLLALGILAPWTVEG. WAP domains are found at residues 29–77 and 83–131; these read DAIK…VNPV and VWRK…LPPM. 8 cysteine pairs are disulfide-bonded: Cys36–Cys65, Cys44–Cys69, Cys52–Cys64, Cys58–Cys73, Cys90–Cys119, Cys97–Cys123, Cys106–Cys118, and Cys112–Cys127. Residues 85–131 are elastase inhibitory domain; the sequence is RKPGRCVKTQARCMMLNPPNVCQRDGQCDGKYKCCEGICGKVCLPPM.

As to quaternary structure, interacts with GRN; interaction protects progranulin from proteolysis. Detected in bronchial epithelial cells. Detected in bronchoalveolar fluid after infection with M.tuberculosis (at protein level). Highest expression in lung, spleen, intestine and epididymis with lower levels in liver and seminal vesicle. No expression in brain, heart, kidney and muscle.

It localises to the secreted. In terms of biological role, acid-stable proteinase inhibitor with strong affinities for trypsin, chymotrypsin, elastase, and cathepsin G. Modulates the innate immune response after bacterial infection. Contributes to regulate the inflammatory and immune responses to the intracellular parasite L.major. Down-regulates responses to bacterial lipopolysaccharide (LPS). Plays a role in regulating the activation of NF-kappa-B and inflammatory responses. Has antimicrobial activity against mycobacteria, but not against salmonella. Contributes to normal resistance against infection by M.tuberculosis. Required for normal resistance to L.major. Required for normal wound healing, probably by preventing tissue damage by limiting protease activity. Together with ELANE, required for normal differentiation and proliferation of bone marrow myeloid cells. The sequence is that of Antileukoproteinase (Slpi) from Mus musculus (Mouse).